The following is a 117-amino-acid chain: Ribosome-binding factor A (117 aa).

It belongs to the RbfA family. As to quaternary structure, monomer. Binds 30S ribosomal subunits, but not 50S ribosomal subunits or 70S ribosomes.

The protein resides in the cytoplasm. One of several proteins that assist in the late maturation steps of the functional core of the 30S ribosomal subunit. Associates with free 30S ribosomal subunits (but not with 30S subunits that are part of 70S ribosomes or polysomes). Required for efficient processing of 16S rRNA. May interact with the 5'-terminal helix region of 16S rRNA. This chain is Ribosome-binding factor A, found in Leptospira borgpetersenii serovar Hardjo-bovis (strain JB197).